The following is a 514-amino-acid chain: Sugar transport protein 4 (514 aa).

Residues 1–22 (MAGGFVSQTPGVRNYNYKLTPK) are Cytoplasmic-facing. 12 helical membrane passes run 23–43 (VFVTCFIGAFGGLIFGYDLGI), 80–100 (LLTLFTSSLYVAALVSSLFAS), 117–137 (FTFFIGSAFNGFAQNIAMLLI), 140–160 (ILLGFGVGFANQSVPVYLSEM), 172–192 (GFQVAIIFGIVVATIINYFTA), 202–222 (ISLGLACVPAVMIMIGALILP), 283–303 (LIMTCFIPFFQQLTGINVITF), 321–341 (LSAMVTGIIELLCTFVSVFTV), 348–368 (ILFLQGGIQMLVSQIAIGAMI), 387–407 (LIVALICIYVAGFAWSWGPLG), 426–446 (INVSVNMFFTFLVAQLFLTML), and 451–471 (FGLFFFFAFFVVIMTIFIYLM). Topologically, residues 472–514 (LPETKNVPIEEMNRVWKAHWFWGKFIPDEAVNMGAAEMQQKSV) are cytoplasmic.

This sequence belongs to the major facilitator superfamily. Sugar transporter (TC 2.A.1.1) family. In terms of tissue distribution, mostly in flowers and roots, especially in anthers, including pollen, and root tips. Also present in some hydathodes.

It is found in the cell membrane. Functionally, mediates an active uptake of hexoses, probably by sugar/hydrogen symport. Can transport glucose, methylglucose, galactose, xylose and mannose, but not fructose. In Arabidopsis thaliana (Mouse-ear cress), this protein is Sugar transport protein 4 (STP4).